The primary structure comprises 310 residues: Nucleotide-binding protein Ddes_0972 (310 aa).

30–37 (GLSGAGKS) contributes to the ATP binding site. 82-85 (DLRQ) provides a ligand contact to GTP.

The protein belongs to the RapZ-like family.

Its function is as follows. Displays ATPase and GTPase activities. The protein is Nucleotide-binding protein Ddes_0972 of Desulfovibrio desulfuricans (strain ATCC 27774 / DSM 6949 / MB).